A 393-amino-acid polypeptide reads, in one-letter code: Cytochrome b (393 aa).

Helical transmembrane passes span 38–58, 82–104, 119–139, and 185–205; these read FGSL…FLAM, WLLR…LHIF, VWCL…IGYV, and FFSL…LHLA. 2 residues coordinate heme b: H88 and H102. The heme b site is built by H189 and H203. Residue H208 coordinates a ubiquinone. A run of 4 helical transmembrane segments spans residues 231 to 251, 295 to 315, 327 to 347, and 354 to 373; these read FYVK…IWIF, VGGV…PFFK, IYQG…WIGC, and FVTI…AITP.

It belongs to the cytochrome b family. In terms of assembly, the main subunits of complex b-c1 are: cytochrome b, cytochrome c1 and the Rieske protein. Requires heme b as cofactor. In terms of processing, first mitochondrial-encoded protein to be shown to have its N-terminal methionine cleaved off.

The protein resides in the mitochondrion inner membrane. Component of the ubiquinol-cytochrome c reductase complex (complex III or cytochrome b-c1 complex) that is part of the mitochondrial respiratory chain. The b-c1 complex mediates electron transfer from ubiquinol to cytochrome c. Contributes to the generation of a proton gradient across the mitochondrial membrane that is then used for ATP synthesis. The protein is Cytochrome b (MT-CYB) of Solanum tuberosum (Potato).